A 442-amino-acid chain; its full sequence is Meiosis-specific with OB domain-containing protein (442 aa).

Positions I167–R272 form a DNA-binding region, OB.

The protein belongs to the MEIOB family. As to quaternary structure, component of a multiprotein complex with RPA2 and SPATA22. Interacts with SPATA22. Interacts with the complex BRME1:HSF2BP:BRCA2. In terms of tissue distribution, in fetal gonads, specifically expressed in the ovary starting at the 14th weeks post fertilization. In the adult, restricted to testis.

It is found in the cytoplasm. Its subcellular location is the nucleus. The protein localises to the chromosome. In terms of biological role, single-stranded DNA-binding protein required for homologous recombination in meiosis I. Required for double strand breaks (DSBs) repair and crossover formation and promotion of faithful and complete synapsis. Not required for the initial loading of recombinases but required to maintain a proper number of RAD51 and DMC1 foci after the zygotene stage. May act by ensuring the stabilization of recombinases, which is required for successful homology search and meiotic recombination. Displays Single-stranded DNA 3'-5' exonuclease activity in vitro. The sequence is that of Meiosis-specific with OB domain-containing protein from Homo sapiens (Human).